The sequence spans 647 residues: Pumilio homolog 3 (647 aa).

Over residues 1 to 10 (MEVKGKKKFT) the composition is skewed to basic residues. The tract at residues 1-123 (MEVKGKKKFT…KKKKELKQSR (123 aa)) is disordered. The residue at position 33 (Lys-33) is an N6-acetyllysine. Residues 59–68 (PGKKGVKQFK) show a composition bias toward basic residues. Basic and acidic residues predominate over residues 102–123 (SGAKKPKWDDFKKKKKELKQSR). A Nuclear localization signal motif is present at residues 105 to 117 (KKPKWDDFKKKKK). The PUM-HD domain occupies 142–509 (ESLRRKDCDK…VVLDKSACVL (368 aa)). 11 Pumilio repeats span residues 176–211 (HDST…LSKA), 212–247 (KYSR…MLRH), 248–276 (SEAS…ELYG), 288–324 (PTLD…VIKH), 325–360 (SLVH…LAHT), 361–396 (HDGA…VANG), 397–434 (QYSH…IVND), 435–503 (KYGR…VVLD), 504–550 (KSAC…VAEH), 551–595 (PAGH…WASI), and 596–635 (NRGA…KSSS).

As to quaternary structure, interacts with PARP1 (via catalytic domain). In terms of tissue distribution, in the adult eye, expressed primarily in retinal ganglion cells and, to a lesser extent, in the pigmented cells.

It localises to the nucleus. It is found in the nucleolus. The protein resides in the nucleoplasm. The protein localises to the chromosome. Functionally, inhibits the poly(ADP-ribosyl)ation activity of PARP1 and the degradation of PARP1 by CASP3 following genotoxic stress. Binds to double-stranded RNA or DNA without sequence specificity. Involved in development of the eye and of primordial germ cells. The polypeptide is Pumilio homolog 3 (Mus musculus (Mouse)).